The chain runs to 137 residues: Putative protein YjhV (137 aa).

Residues 1-16 are compositionally biased toward polar residues; that stretch reads MVGYHQTNQKTDTGKT. The segment at 1-20 is disordered; sequence MVGYHQTNQKTDTGKTLTRR.

This is Putative protein YjhV (yjhV) from Escherichia coli (strain K12).